We begin with the raw amino-acid sequence, 670 residues long: Probable urocanate hydratase (670 aa).

Residues Gly126–Gly127, Gln204, Gly250–Ser252, Glu270, Asn316–Val317, Gln338–His342, Phe349–Tyr350, Tyr398, and Gly590 each bind NAD(+).

It belongs to the urocanase family. NAD(+) is required as a cofactor.

It catalyses the reaction 4-imidazolone-5-propanoate = trans-urocanate + H2O. Its pathway is amino-acid degradation; L-histidine degradation into L-glutamate; N-formimidoyl-L-glutamate from L-histidine: step 2/3. The sequence is that of Probable urocanate hydratase from Caenorhabditis elegans.